We begin with the raw amino-acid sequence, 142 residues long: Thioredoxin-like protein 4A (142 aa).

Residues Cys38 and Cys79 are joined by a disulfide bond. The residue at position 132 (Ser132) is a Phosphoserine.

It belongs to the DIM1 family. Component of the precatalytic spliceosome (spliceosome B complex). Component of the U5 snRNP complex. Component of the U4/U6-U5 tri-snRNP complex. The U4/U6-U5 tri-snRNP complex is a building block of the precatalytic spliceosome (spliceosome B complex). The U4/U6-U5 tri-snRNP complex is composed of the U4, U6 and U5 snRNAs and at least PRPF3, PRPF4, PRPF6, PRPF8, PRPF31, SNRNP200, TXNL4A, SNRNP40, SNRPB, SNRPD1, SNRPD2, SNRPD3, SNRPE, SNRPF, SNRPG, DDX23, CD2BP2, PPIH, SNU13, EFTUD2, SART1 and USP39, plus LSM2, LSM3, LSM4, LSM5, LSM6, LSM7 and LSM8. Directly interacts with CD2BP2. Interacts with HNRPF, HNRPH2, NEDD9 and PQBP1. Interacts with ERBB4. The disulfide bond seen in structures determined by X-ray crystallography and NMR is not essential for protein folding and function.

It localises to the nucleus. Its function is as follows. Plays a role in pre-mRNA splicing as component of the U5 snRNP and U4/U6-U5 tri-snRNP complexes that are involved in spliceosome assembly, and as component of the precatalytic spliceosome (spliceosome B complex). This chain is Thioredoxin-like protein 4A (TXNL4A), found in Homo sapiens (Human).